The chain runs to 284 residues: Nucleotide-binding protein NMA0948 (284 aa).

Residue 8–15 (GLSGSGKS) participates in ATP binding. 58–61 (DVRS) is a GTP binding site.

It belongs to the RapZ-like family.

In terms of biological role, displays ATPase and GTPase activities. This Neisseria meningitidis serogroup A / serotype 4A (strain DSM 15465 / Z2491) protein is Nucleotide-binding protein NMA0948.